The primary structure comprises 62 residues: MAKVCYFTGRKTVSGNNRSHAMNQTKRAVKPNLQKVTVLIDGKPKKVWASARALKSGKVERV.

It belongs to the bacterial ribosomal protein bL28 family.

This chain is Large ribosomal subunit protein bL28, found in Streptococcus gordonii (strain Challis / ATCC 35105 / BCRC 15272 / CH1 / DL1 / V288).